A 369-amino-acid chain; its full sequence is Tyrosinase-like protein orsC (369 aa).

A signal peptide spans 1-23 (MLAFNPLVTALAALIFLFCQANA). Cu cation is bound by residues His112 and His121. N-linked (GlcNAc...) asparagine glycans are attached at residues Asn165, Asn179, Asn253, and Asn272. Residue His315 coordinates Cu cation.

Its pathway is secondary metabolite biosynthesis. Its function is as follows. Tyrosinase-like protein; part of the gene cluster that mediates the biosynthesis of orsellinic acid, as well as of the cathepsin K inhibitors F9775 A and F9775 B. The non-reducing polyketide synthase orsA produces orsellinic acid by condensing acetyl-CoA with 3 malonyl-CoA units. Further modifications by the decarboxylase orsB and the tyrosinase-like protein orsC lead to the production of F9775 A and F9775 B. The functions of orsD and orsE remain unclear since only orsB and orsC are required to convert orsellinic acid into F9775 A and F9775 B. In Emericella nidulans (strain FGSC A4 / ATCC 38163 / CBS 112.46 / NRRL 194 / M139) (Aspergillus nidulans), this protein is Tyrosinase-like protein orsC.